A 361-amino-acid chain; its full sequence is Phospho-N-acetylmuramoyl-pentapeptide-transferase (361 aa).

10 helical membrane-spanning segments follow: residues 25-45 (RGILAALTALFLSLWMGPAVI), 73-93 (TMGGSLILLTVTLSVLLWGDL), 98-118 (VWLVLAVMICFGAIGWYDDWI), 139-159 (IFGLAAGLFLYYTADVPAAIT), 168-188 (IALPLVGVSFVVIAYFWIVGF), 200-220 (GLAIMPTVLVACALGVFAYAS), 237-257 (AGELIIICSAIAGAGLGFLWF), 264-284 (VFMGDIGALSLGAVLGTIAVI), 289-309 (MVLVIMGGVFVIETLSVIIQV), and 339-359 (VIVRFWIISVVLVLIGLATLK).

It belongs to the glycosyltransferase 4 family. MraY subfamily. It depends on Mg(2+) as a cofactor.

It localises to the cell inner membrane. The enzyme catalyses UDP-N-acetyl-alpha-D-muramoyl-L-alanyl-gamma-D-glutamyl-meso-2,6-diaminopimeloyl-D-alanyl-D-alanine + di-trans,octa-cis-undecaprenyl phosphate = di-trans,octa-cis-undecaprenyl diphospho-N-acetyl-alpha-D-muramoyl-L-alanyl-D-glutamyl-meso-2,6-diaminopimeloyl-D-alanyl-D-alanine + UMP. The protein operates within cell wall biogenesis; peptidoglycan biosynthesis. Catalyzes the initial step of the lipid cycle reactions in the biosynthesis of the cell wall peptidoglycan: transfers peptidoglycan precursor phospho-MurNAc-pentapeptide from UDP-MurNAc-pentapeptide onto the lipid carrier undecaprenyl phosphate, yielding undecaprenyl-pyrophosphoryl-MurNAc-pentapeptide, known as lipid I. The polypeptide is Phospho-N-acetylmuramoyl-pentapeptide-transferase (Xanthomonas oryzae pv. oryzae (strain MAFF 311018)).